The sequence spans 901 residues: Pyruvate, phosphate dikinase (901 aa).

The N-terminal stretch occupies residues 1–321 (MNIAKSIHFL…WLIEQKPVEA (321 aa)). The linker 1 stretch occupies residues 322–380 (KSTISLVRLLLDLYEREVVDAEYVVKSVKPGQLNEILHPVIDMTSVTGLKSSQGGIIGV). Positions 381–482 (PGAAVGRVYF…TINEGDFVTL (102 aa)) are central. Ser-440 carries the phosphoserine; by PDRP1 modification. Catalysis depends on His-442, which acts as the Tele-phosphohistidine intermediate. Residues 483 to 522 (NVPYYGESTLYMGAAQLIEPDPETSGLVSFIELAKGFVRS) form a linker 2 region. The tract at residues 523 to 901 (FHVRANADSP…SAKSGGRRAR (379 aa)) is C-terminal. Residues Arg-550, Arg-606, Glu-750, Gly-771, Thr-772, Asn-773, and Asp-774 each coordinate substrate. Glu-750 provides a ligand contact to Mg(2+). Residue Asp-774 coordinates Mg(2+). Cys-835 functions as the Proton donor in the catalytic mechanism. The tract at residues 879–901 (EKEGRKPAWRGRSSAKSGGRRAR) is disordered.

Belongs to the PEP-utilizing enzyme family. Homodimer. The cofactor is Mg(2+). Post-translationally, phosphorylation of Ser-440 in the dark inactivates the enzyme. Dephosphorylation upon light stimulation reactivates the enzyme.

The catalysed reaction is pyruvate + phosphate + ATP = phosphoenolpyruvate + AMP + diphosphate + H(+). With respect to regulation, activated by light-induced dephosphorylation. Inhibited by dark-induced phosphorylation. Both reactions are catalyzed by PDRP1. Its function is as follows. Catalyzes the reversible phosphorylation of pyruvate and phosphate. The sequence is that of Pyruvate, phosphate dikinase (ppdK) from Treponema pallidum (strain Nichols).